The primary structure comprises 545 residues: Glucose-6-phosphate isomerase (545 aa).

The Proton donor role is filled by Glu-351. Active-site residues include His-382 and Lys-510.

The protein belongs to the GPI family.

It localises to the cytoplasm. It carries out the reaction alpha-D-glucose 6-phosphate = beta-D-fructose 6-phosphate. The protein operates within carbohydrate biosynthesis; gluconeogenesis. Its pathway is carbohydrate degradation; glycolysis; D-glyceraldehyde 3-phosphate and glycerone phosphate from D-glucose: step 2/4. In terms of biological role, catalyzes the reversible isomerization of glucose-6-phosphate to fructose-6-phosphate. In Shewanella sp. (strain MR-7), this protein is Glucose-6-phosphate isomerase.